The primary structure comprises 210 residues: Na(+)-translocating NADH-quinone reductase subunit D (210 aa).

The next 5 membrane-spanning stretches (helical) occupy residues Phe42 to Ile62, Ile72 to Ala92, Val103 to Met123, Phe131 to Phe151, and Asn178 to Ile198.

It belongs to the NqrDE/RnfAE family. Composed of six subunits; NqrA, NqrB, NqrC, NqrD, NqrE and NqrF.

It is found in the cell inner membrane. The enzyme catalyses a ubiquinone + n Na(+)(in) + NADH + H(+) = a ubiquinol + n Na(+)(out) + NAD(+). In terms of biological role, NQR complex catalyzes the reduction of ubiquinone-1 to ubiquinol by two successive reactions, coupled with the transport of Na(+) ions from the cytoplasm to the periplasm. NqrA to NqrE are probably involved in the second step, the conversion of ubisemiquinone to ubiquinol. The protein is Na(+)-translocating NADH-quinone reductase subunit D of Vibrio cholerae serotype O1 (strain M66-2).